We begin with the raw amino-acid sequence, 565 residues long: Oxygen-dependent choline dehydrogenase (565 aa).

Position 6–35 (6–35 (DYIIVGAGSAGNTLATRLTEDAGVTVLLLE)) interacts with FAD. His-475 serves as the catalytic Proton acceptor.

It belongs to the GMC oxidoreductase family. Requires FAD as cofactor.

It catalyses the reaction choline + A = betaine aldehyde + AH2. The enzyme catalyses betaine aldehyde + NAD(+) + H2O = glycine betaine + NADH + 2 H(+). The protein operates within amine and polyamine biosynthesis; betaine biosynthesis via choline pathway; betaine aldehyde from choline (cytochrome c reductase route): step 1/1. Functionally, involved in the biosynthesis of the osmoprotectant glycine betaine. Catalyzes the oxidation of choline to betaine aldehyde and betaine aldehyde to glycine betaine at the same rate. The protein is Oxygen-dependent choline dehydrogenase of Pseudomonas putida (strain ATCC 700007 / DSM 6899 / JCM 31910 / BCRC 17059 / LMG 24140 / F1).